A 457-amino-acid chain; its full sequence is Heme sensor protein HssS (457 aa).

The next 2 membrane-spanning stretches (helical) occupy residues 9-29 (IAIYSITVILFSALISFVLTN) and 164-184 (TFLAVLLMLLLFISISLVIAS). The 53-residue stretch at 186–238 (YSIIRPVKKLKLATERLIDGDFETPIKQTRKDEIGTLQYHFNKMRESLGQVDQ) folds into the HAMP domain. The Histidine kinase domain maps to 246–456 (NVSHEIKTPL…TFTITLPNNS (211 aa)). Histidine 249 bears the Phosphohistidine; by autocatalysis mark.

In terms of processing, autophosphorylated.

Its subcellular location is the cell membrane. The enzyme catalyses ATP + protein L-histidine = ADP + protein N-phospho-L-histidine.. Functionally, member of the two-component regulatory system HssS/HssR involved in intracellular heme homeostasis and tempering of staphylococcal virulence. HssS functions as a heme sensor histidine kinase which is autophosphorylated at a histidine residue and transfers its phosphate group to an aspartate residue of HssR. HssR/HssS activates the expression of hrtAB, an efflux pump, in response to extracellular heme, hemin, hemoglobin or blood. This Staphylococcus aureus (strain Mu3 / ATCC 700698) protein is Heme sensor protein HssS (hssS).